The chain runs to 252 residues: Uridylate kinase (252 aa).

27 to 30 (KLGG) contributes to the ATP binding site. Residue G68 participates in UMP binding. ATP-binding residues include G69 and R73. Residues D88 and 149 to 156 (MGLPYFST) contribute to the UMP site. ATP contacts are provided by Y182 and D185.

It belongs to the UMP kinase family. Homohexamer.

It localises to the cytoplasm. The enzyme catalyses UMP + ATP = UDP + ADP. It participates in pyrimidine metabolism; CTP biosynthesis via de novo pathway; UDP from UMP (UMPK route): step 1/1. Inhibited by UTP. Catalyzes the reversible phosphorylation of UMP to UDP. This is Uridylate kinase from Mycobacterium sp. (strain JLS).